Reading from the N-terminus, the 450-residue chain is Nicotinamide phosphoribosyltransferase (450 aa).

Arginine 210 contributes to the diphosphate binding site. Aspartate 233 contacts beta-nicotinamide D-ribonucleotide. Residues histidine 249 and arginine 310 each contribute to the diphosphate site. Residues 310–312 (RAD), 364–365 (GD), and arginine 403 each bind beta-nicotinamide D-ribonucleotide.

It belongs to the NAPRTase family.

The enzyme catalyses beta-nicotinamide D-ribonucleotide + diphosphate = 5-phospho-alpha-D-ribose 1-diphosphate + nicotinamide + H(+). Its pathway is cofactor biosynthesis; NAD(+) biosynthesis; nicotinamide D-ribonucleotide from 5-phospho-alpha-D-ribose 1-diphosphate and nicotinamide: step 1/1. Functionally, catalyzes the condensation of nicotinamide with 5-phosphoribosyl-1-pyrophosphate to yield nicotinamide mononucleotide, an intermediate in the biosynthesis of NAD. The polypeptide is Nicotinamide phosphoribosyltransferase (Mycoplasma genitalium (strain ATCC 33530 / DSM 19775 / NCTC 10195 / G37) (Mycoplasmoides genitalium)).